Consider the following 303-residue polypeptide: Methionyl-tRNA formyltransferase (303 aa).

108-111 (SDLP) serves as a coordination point for (6S)-5,6,7,8-tetrahydrofolate.

This sequence belongs to the Fmt family.

The catalysed reaction is L-methionyl-tRNA(fMet) + (6R)-10-formyltetrahydrofolate = N-formyl-L-methionyl-tRNA(fMet) + (6S)-5,6,7,8-tetrahydrofolate + H(+). Its function is as follows. Attaches a formyl group to the free amino group of methionyl-tRNA(fMet). The formyl group appears to play a dual role in the initiator identity of N-formylmethionyl-tRNA by promoting its recognition by IF2 and preventing the misappropriation of this tRNA by the elongation apparatus. In Rickettsia rickettsii (strain Iowa), this protein is Methionyl-tRNA formyltransferase.